The following is a 161-amino-acid chain: DNA-directed RNA polymerase 18 kDa subunit (161 aa).

Belongs to the poxviridae DNA-directed RNA polymerase 18 kDa subunit family. In terms of assembly, the DNA-dependent RNA polymerase used for intermediate and late genes expression consists of eight subunits Rpo30/OPG66, Rpo7/OPG90, Rpo22/OPG103, Rpo147/OPG105, Rpo18/OPG119, Rpo19/OPG131, Rpo132/OPG151 and Rpo35/OPG156. The same holoenzyme, with the addition of the transcription-specificity factor OPG109, is used for early gene expression.

Its subcellular location is the virion. It catalyses the reaction RNA(n) + a ribonucleoside 5'-triphosphate = RNA(n+1) + diphosphate. Its function is as follows. Part of the DNA-dependent RNA polymerase which catalyzes the transcription of viral DNA into RNA using the four ribonucleoside triphosphates as substrates. Responsible for the transcription of early, intermediate and late genes. DNA-dependent RNA polymerase associates with the early transcription factor (ETF), itself composed of OPG118 and OPG133, thereby allowing the early genes transcription. Late transcription, and probably also intermediate transcription, require newly synthesized RNA polymerase. In Vaccinia virus (strain Ankara) (VACV), this protein is DNA-directed RNA polymerase 18 kDa subunit (OPG119).